Here is a 280-residue protein sequence, read N- to C-terminus: ATP synthase gamma chain (280 aa).

Belongs to the ATPase gamma chain family. F-type ATPases have 2 components, CF(1) - the catalytic core - and CF(0) - the membrane proton channel. CF(1) has five subunits: alpha(3), beta(3), gamma(1), delta(1), epsilon(1). CF(0) has three main subunits: a, b and c.

The protein resides in the cell membrane. In terms of biological role, produces ATP from ADP in the presence of a proton gradient across the membrane. The gamma chain is believed to be important in regulating ATPase activity and the flow of protons through the CF(0) complex. In Mycoplasma capricolum subsp. capricolum (strain California kid / ATCC 27343 / NCTC 10154), this protein is ATP synthase gamma chain.